A 504-amino-acid chain; its full sequence is Maturase K (504 aa).

It belongs to the intron maturase 2 family. MatK subfamily.

The protein localises to the plastid. It localises to the chloroplast. In terms of biological role, usually encoded in the trnK tRNA gene intron. Probably assists in splicing its own and other chloroplast group II introns. The polypeptide is Maturase K (Calyptranthes pallens (Spicewood)).